The following is a 329-amino-acid chain: Secretory carrier-associated membrane protein 2 (329 aa).

Disordered regions lie at residues 1–21 (MSAF…FQDP) and 51–72 (VTQL…PTQP). Residues 1-153 (MSAFDTNPFA…DYQRICKMLY (153 aa)) are Cytoplasmic-facing. A helical membrane pass occupies residues 154-174 (YLWMLHSVTLFLNLLACLAWF). The Lumenal segment spans residues 175–181 (SGNSSKG). The helical transmembrane segment at 182–202 (VDFGLSILWFLIFTPCAFLCW) threads the bilayer. Residues 203–218 (YRPIYKAFRSDNSFSF) are Cytoplasmic-facing. An interaction with SLC9A7 region spans residues 203 to 218 (YRPIYKAFRSDNSFSF). Residues 219 to 239 (FVFFFVFFCQIGIYIIQLVGI) traverse the membrane as a helical segment. Residues 240–262 (PGLGDSGWIAALSTLDNHSLAIS) lie on the Lumenal side of the membrane. A helical transmembrane segment spans residues 263-283 (VIMMVVAGFFTLCAVLSVFLL). At 284–329 (QRVHSLYRRTGASFQQAQEEFSQGIFSSRTFHRAASSAAQGAFQGN) the chain is on the cytoplasmic side. Residues serine 319 and serine 320 each carry the phosphoserine modification.

The protein belongs to the SCAMP family. In terms of assembly, interacts with SLC6A4 and SLC9A7. Interacts with SLC9A5; this interaction regulates SLC9A5 cell-surface targeting and SLC9A5 activity. As to expression, widely expressed.

It is found in the golgi apparatus. The protein resides in the trans-Golgi network membrane. It localises to the recycling endosome membrane. In terms of biological role, functions in post-Golgi recycling pathways. Acts as a recycling carrier to the cell surface. The chain is Secretory carrier-associated membrane protein 2 (SCAMP2) from Homo sapiens (Human).